The primary structure comprises 298 residues: Glutamate/glycine mitochondrial carrier ymc1 (298 aa).

3 Solcar repeats span residues Thr14–Phe98, Val106–Asn193, and Thr206–His294. Helical transmembrane passes span Phe17–Val37, Leu67–Ile87, Tyr112–Val132, Thr172–Lys192, Cys212–Val232, and Phe266–Val287.

This sequence belongs to the mitochondrial carrier (TC 2.A.29) family.

It is found in the mitochondrion inner membrane. Acts as a glutamate and glycine mitochondrial transmembrane transporter. The sequence is that of Glutamate/glycine mitochondrial carrier ymc1 (ymc1) from Schizosaccharomyces pombe (strain 972 / ATCC 24843) (Fission yeast).